The chain runs to 153 residues: Superoxide dismutase [Cu-Zn] (153 aa).

Residues histidine 45, histidine 47, and histidine 62 each contribute to the Cu cation site. Cysteine 56 and cysteine 145 are oxidised to a cystine. Zn(2+)-binding residues include histidine 62, histidine 70, histidine 79, and aspartate 82. Residue histidine 119 coordinates Cu cation.

It belongs to the Cu-Zn superoxide dismutase family. As to quaternary structure, homodimer. It depends on Cu cation as a cofactor. Zn(2+) is required as a cofactor.

Its subcellular location is the cytoplasm. It catalyses the reaction 2 superoxide + 2 H(+) = H2O2 + O2. Functionally, destroys radicals which are normally produced within the cells and which are toxic to biological systems. This Ceratitis capitata (Mediterranean fruit fly) protein is Superoxide dismutase [Cu-Zn].